The following is a 631-amino-acid chain: Polyadenylate-binding protein 3 (631 aa).

RRM domains are found at residues 11–89 (ASLY…WSQR), 99–175 (GNIF…QFKS), 191–268 (PNVY…RAQK), and 294–370 (VNLY…LAQR). Position 140 is a phosphotyrosine (Tyr-140). A Phosphoserine modification is found at Ser-315. Lys-361 carries the post-translational modification N6,N6-dimethyllysine; alternate. Lys-361 is covalently cross-linked (Glycyl lysine isopeptide (Lys-Gly) (interchain with G-Cter in SUMO2); alternate). A Phosphotyrosine modification is found at Tyr-364. Arg-426, Arg-430, and Arg-449 each carry omega-N-methylarginine. Arg-501 carries the dimethylated arginine modification. At Arg-513 the chain carries Omega-N-methylarginine. Residues 537–614 (QETLTASRLA…AVAVLQAHQA (78 aa)) form the PABC domain.

The protein belongs to the polyadenylate-binding protein type-1 family. As to expression, testis specific.

The protein localises to the cytoplasm. Its function is as follows. Binds the poly(A) tail of mRNA. May be involved in cytoplasmic regulatory processes of mRNA metabolism. Binds poly(A) with a slightly lower affinity as compared to PABPC1. This is Polyadenylate-binding protein 3 (PABPC3) from Homo sapiens (Human).